We begin with the raw amino-acid sequence, 166 residues long: NAD(P)H-quinone oxidoreductase subunit I, chloroplastic (166 aa).

2 4Fe-4S ferredoxin-type domains span residues G55–K84 and L95–E124. C64, C67, C70, C74, C104, C107, C110, and C114 together coordinate [4Fe-4S] cluster.

It belongs to the complex I 23 kDa subunit family. NDH is composed of at least 16 different subunits, 5 of which are encoded in the nucleus. It depends on [4Fe-4S] cluster as a cofactor.

It localises to the plastid. The protein localises to the chloroplast thylakoid membrane. It catalyses the reaction a plastoquinone + NADH + (n+1) H(+)(in) = a plastoquinol + NAD(+) + n H(+)(out). The enzyme catalyses a plastoquinone + NADPH + (n+1) H(+)(in) = a plastoquinol + NADP(+) + n H(+)(out). Its function is as follows. NDH shuttles electrons from NAD(P)H:plastoquinone, via FMN and iron-sulfur (Fe-S) centers, to quinones in the photosynthetic chain and possibly in a chloroplast respiratory chain. The immediate electron acceptor for the enzyme in this species is believed to be plastoquinone. Couples the redox reaction to proton translocation, and thus conserves the redox energy in a proton gradient. The protein is NAD(P)H-quinone oxidoreductase subunit I, chloroplastic of Parthenium hysterophorus (Santa Maria feverfew).